The following is a 984-amino-acid chain: Translation initiation factor IF-2 (984 aa).

Disordered stretches follow at residues 92–267 (KKRT…ERRR) and 280–392 (MNAP…EEHV). Residues 104 to 123 (PATPEVQPVAEAPAAAPAAP) are compositionally biased toward low complexity. Residues 124 to 177 (RIDEAELARREEEARRQAELIRRQEEELAEKRRLREEAEAREREQAEKAERAEQ) are compositionally biased toward basic and acidic residues. Low complexity predominate over residues 193–235 (DAAAAAPAKEAAKPAAAPVAAAAAAAEQQAADTKLAAQTAATQ). Composition is skewed to basic and acidic residues over residues 236–267 (AKEDAKAKAAAESKARADEEAARAKDLDERRR) and 291–302 (KAPEKPQPEKAA). The segment covering 310 to 335 (PAAPAARPGAPAAPGAAAAPGAAGAG) has biased composition (low complexity). The span at 351–361 (PAKKKEIKTRG) shows a compositional bias: basic and acidic residues. Residues 363-375 (ASGGVGRGNWRGG) are compositionally biased toward gly residues. Basic and acidic residues predominate over residues 381–392 (GSNDRGGHEEHV). Residues 484 to 653 (PRAPVVTVMG…LLQAEVLELK (170 aa)) enclose the tr-type G domain. Residues 493–500 (GHVDHGKT) are G1. A GTP-binding site is contributed by 493 to 500 (GHVDHGKT). The G2 stretch occupies residues 518-522 (GITQH). Residues 539–542 (DTPG) are G3. GTP-binding positions include 539-543 (DTPGH) and 593-596 (NKID). Positions 593–596 (NKID) are G4. The tract at residues 629 to 631 (SAK) is G5.

Belongs to the TRAFAC class translation factor GTPase superfamily. Classic translation factor GTPase family. IF-2 subfamily.

It localises to the cytoplasm. One of the essential components for the initiation of protein synthesis. Protects formylmethionyl-tRNA from spontaneous hydrolysis and promotes its binding to the 30S ribosomal subunits. Also involved in the hydrolysis of GTP during the formation of the 70S ribosomal complex. This Variovorax paradoxus (strain S110) protein is Translation initiation factor IF-2.